The following is a 336-amino-acid chain: UDP-N-acetylenolpyruvoylglucosamine reductase (336 aa).

Residues 17 to 188 form the FAD-binding PCMH-type domain; the sequence is GFDVRARYAS…TAVTLRLSRD (172 aa). Arginine 164 is a catalytic residue. Serine 236 (proton donor) is an active-site residue. Glutamate 332 is an active-site residue.

The protein belongs to the MurB family. It depends on FAD as a cofactor.

The protein resides in the cytoplasm. It carries out the reaction UDP-N-acetyl-alpha-D-muramate + NADP(+) = UDP-N-acetyl-3-O-(1-carboxyvinyl)-alpha-D-glucosamine + NADPH + H(+). It functions in the pathway cell wall biogenesis; peptidoglycan biosynthesis. Cell wall formation. The chain is UDP-N-acetylenolpyruvoylglucosamine reductase from Cupriavidus pinatubonensis (strain JMP 134 / LMG 1197) (Cupriavidus necator (strain JMP 134)).